The following is a 515-amino-acid chain: Probable multifunctional siroheme biosynthesis protein HemA (515 aa).

NAD(+) contacts are provided by residues 26 to 27 and 47 to 48; these read SL and IR. The interval 26 to 174 is glutamyl-tRNA reductase; the sequence is SLDYKSAAID…TAAKKAKTEI (149 aa). Residues 68-71, serine 127, glutamate 132, and glutamine 138 contribute to the L-glutamyl-tRNA(Glu) site; that span reads TCNR. Cysteine 69 acts as the Nucleophile in catalysis. 206-211 is an NADP(+) binding site; it reads GNGEIG. The tract at residues 367–507 is precorrin-2 dehydrogenase /sirohydrochlorin ferrochelatase; the sequence is FPLFIDLSGK…SLVKSVAEQI (141 aa).

In the N-terminal section; belongs to the glutamyl-tRNA reductase family. It in the C-terminal section; belongs to the precorrin-2 dehydrogenase / sirohydrochlorin ferrochelatase family. In terms of assembly, homodimer.

It catalyses the reaction (S)-4-amino-5-oxopentanoate + tRNA(Glu) + NADP(+) = L-glutamyl-tRNA(Glu) + NADPH + H(+). It carries out the reaction precorrin-2 + NAD(+) = sirohydrochlorin + NADH + 2 H(+). The enzyme catalyses siroheme + 2 H(+) = sirohydrochlorin + Fe(2+). The protein operates within cofactor biosynthesis; adenosylcobalamin biosynthesis; sirohydrochlorin from precorrin-2: step 1/1. It participates in porphyrin-containing compound metabolism; siroheme biosynthesis; siroheme from sirohydrochlorin: step 1/1. It functions in the pathway porphyrin-containing compound metabolism; siroheme biosynthesis; sirohydrochlorin from precorrin-2: step 1/1. Its pathway is porphyrin-containing compound metabolism; protoporphyrin-IX biosynthesis; 5-aminolevulinate from L-glutamyl-tRNA(Glu): step 1/2. Its function is as follows. Multifunctional enzyme that catalyzes the NADPH-dependent reduction of glutamyl-tRNA(Glu) to glutamate 1-semialdehyde (GSA), the NAD-dependent ring dehydrogenation of precorrin-2 to sirohydrochlorin and finally, the ferrochelation of sirohydrochlorin to yield siroheme. The polypeptide is Probable multifunctional siroheme biosynthesis protein HemA (Ruminiclostridium josui (Clostridium josui)).